A 437-amino-acid polypeptide reads, in one-letter code: Adenylosuccinate synthetase (437 aa).

GTP-binding positions include Gly12 to Lys18 and Gly40 to Thr42. Asp13 acts as the Proton acceptor in catalysis. Asp13 and Gly40 together coordinate Mg(2+). IMP-binding positions include Asp13–Lys16, Asn38–His41, Thr128, Arg142, Gln223, Thr238, and Arg302. His41 (proton donor) is an active-site residue. Thr298–Arg304 provides a ligand contact to substrate. GTP is bound by residues Arg304, Lys330–Asp332, and Ser412–Gly414.

Belongs to the adenylosuccinate synthetase family. In terms of assembly, homodimer. The cofactor is Mg(2+).

It is found in the cytoplasm. It catalyses the reaction IMP + L-aspartate + GTP = N(6)-(1,2-dicarboxyethyl)-AMP + GDP + phosphate + 2 H(+). The protein operates within purine metabolism; AMP biosynthesis via de novo pathway; AMP from IMP: step 1/2. In terms of biological role, plays an important role in the de novo pathway of purine nucleotide biosynthesis. Catalyzes the first committed step in the biosynthesis of AMP from IMP. The polypeptide is Adenylosuccinate synthetase (Synechococcus sp. (strain CC9311)).